The following is a 169-amino-acid chain: Succinate dehydrogenase cytochrome b560 subunit, mitochondrial (169 aa).

The N-terminal 29 residues, 1 to 29 (MAALLLRHVGRHCLRAHLSPQLCIRNAVP), are a transit peptide targeting the mitochondrion. The Mitochondrial matrix portion of the chain corresponds to 30–62 (LGTTAKEEMERFWSKNTTLNRPLSPHISIYGWS). Residues 63-92 (LPMAMSICHRGTGIALSAGVSLFGLSALLV) form a helical membrane-spanning segment. Topologically, residues 93 to 112 (PGSFESHLEFVKSLCLGPAL) are mitochondrial intermembrane. A helical membrane pass occupies residues 113–137 (IHTAKFALVFPLMYHTWNGIRHLMW). Heme b is bound at residue histidine 127. The Mitochondrial matrix portion of the chain corresponds to 138 to 144 (DLGKGLT). A helical membrane pass occupies residues 145–166 (ISQLHQSGVAVLVLTVLSSVGL). The Mitochondrial intermembrane portion of the chain corresponds to 167–169 (AAM).

It belongs to the cytochrome b560 family. As to quaternary structure, component of complex II composed of four subunits: the flavoprotein (FP) SDHA, iron-sulfur protein (IP) SDHB, and a cytochrome b560 composed of SDHC and SDHD. The cofactor is heme b. The N-terminus is blocked.

It localises to the mitochondrion inner membrane. The protein operates within carbohydrate metabolism; tricarboxylic acid cycle. In terms of biological role, membrane-anchoring subunit of succinate dehydrogenase (SDH) that is involved in complex II of the mitochondrial electron transport chain and is responsible for transferring electrons from succinate to ubiquinone (coenzyme Q). SDH also oxidizes malate to the non-canonical enol form of oxaloacetate, enol-oxaloacetate. Enol-oxaloacetate, which is a potent inhibitor of the succinate dehydrogenase activity, is further isomerized into keto-oxaloacetate. The polypeptide is Succinate dehydrogenase cytochrome b560 subunit, mitochondrial (SDHC) (Bos taurus (Bovine)).